Reading from the N-terminus, the 69-residue chain is UPF0337 protein XAC4007 (69 aa).

This sequence belongs to the UPF0337 (CsbD) family.

In Xanthomonas axonopodis pv. citri (strain 306), this protein is UPF0337 protein XAC4007.